We begin with the raw amino-acid sequence, 171 residues long: Thioredoxin-2 (171 aa).

In terms of domain architecture, Thioredoxin spans alanine 41–proline 169. Cysteines 95 and 98 form a disulfide.

The protein belongs to the thioredoxin family.

It is found in the cytoplasm. It localises to the vacuole. In terms of biological role, thioredoxin involved in responses to oxidative and cell wall stresses. Plays an important role in appressorium formation on hyphal tips. TRX2 may affect invasive growth via the MST11-MST7-PMK1 pathway since it is required for the proper folding or dimerization of MAPKK MST7. The protein is Thioredoxin-2 of Pyricularia oryzae (strain 70-15 / ATCC MYA-4617 / FGSC 8958) (Rice blast fungus).